A 314-amino-acid polypeptide reads, in one-letter code: Ribosomal RNA small subunit methyltransferase H 2 (314 aa).

S-adenosyl-L-methionine-binding positions include 33–35 (AGH), aspartate 53, tyrosine 80, aspartate 101, and glutamine 108. The disordered stretch occupies residues 293–314 (KELEENSRSKSAKLRVFEKNDL).

This sequence belongs to the methyltransferase superfamily. RsmH family.

The protein localises to the cytoplasm. The catalysed reaction is cytidine(1402) in 16S rRNA + S-adenosyl-L-methionine = N(4)-methylcytidine(1402) in 16S rRNA + S-adenosyl-L-homocysteine + H(+). Functionally, specifically methylates the N4 position of cytidine in position 1402 (C1402) of 16S rRNA. This chain is Ribosomal RNA small subunit methyltransferase H 2, found in Agathobacter rectalis (strain ATCC 33656 / DSM 3377 / JCM 17463 / KCTC 5835 / VPI 0990) (Eubacterium rectale).